Consider the following 20-residue polypeptide: GVLFASGQNLARTLIEFLLR.

Ser6 is subject to Phosphoserine.

It belongs to the peptidase M17 family. Homohexamer. Zn(2+) is required as a cofactor. Mn(2+) serves as cofactor.

The protein resides in the cytoplasm. The enzyme catalyses Release of an N-terminal amino acid, Xaa-|-Yaa-, in which Xaa is preferably Leu, but may be other amino acids including Pro although not Arg or Lys, and Yaa may be Pro. Amino acid amides and methyl esters are also readily hydrolyzed, but rates on arylamides are exceedingly low.. It carries out the reaction an S-substituted L-cysteinylglycine + H2O = an S-substituted L-cysteine + glycine. It catalyses the reaction L-cysteinylglycine + H2O = L-cysteine + glycine. The catalysed reaction is S-benzyl-L-cysteinylglycine + H2O = S-benzyl-L-cysteine + glycine. The enzyme catalyses Release of N-terminal proline from a peptide.. Cytosolic metallopeptidase that catalyzes the removal of unsubstituted N-terminal hydrophobic amino acids from various peptides. The presence of Zn(2+) ions is essential for the peptidase activity, and the association with other cofactors can modulate the substrate spectificity of the enzyme. For instance, in the presence of Mn(2+), it displays a specific Cys-Gly hydrolyzing activity of Cys-Gly-S-conjugates. Involved in the metabolism of glutathione and in the degradation of glutathione S-conjugates, which may play a role in the control of the cell redox status. This is Cytosol aminopeptidase from Mesocricetus auratus (Golden hamster).